The chain runs to 486 residues: MITTEIKRVKNHINGEWVESTGTEVEAVPNPATGKIIAYVPLSPKEDVEKAVEAAKAAFETWSKVPVPNRSRNLYKYLQLLQENKDELAKIITLENGKTLTDATGEVQRGIEAVELATSTPNLMMGQALPNIASGIDGSIWRYPIGVVAGITPFNFPMMIPLWMFPLAIACGNTFVLKTSERTPLLAERLVELFYEAGFPKGVLNLVQGGKDVVNSILENKDIQAVSFVGSEPVARYVYETGTKHGKRVQALAGAKNHAIVMPDCNLEKTVQGVIGSAFASSGERCMACSVVAVVDEIADEFIDVLVAETKKLKVGDGFNEDNYVGPLIRESHKERVLGYINSGVADGATLLVDGRKINEEVGEGYFVGATIFDGVNQEMKIWQDEIFAPVLSIVRVKDLEEGIKLTNQSKFANGAVIYTSNGKHAQTFRDNIDAGMIGVNVNVPAPMAFFAFAGNKASFFGDLSTNGTDGVQFYTRKKVVTERWF.

5 residues coordinate NAD(+): Phe154, Lys178, Glu181, Arg182, and Ser231. Cys286 functions as the Nucleophile in the catalytic mechanism. Glu386 is a binding site for NAD(+).

Belongs to the aldehyde dehydrogenase family. IolA subfamily. In terms of assembly, homotetramer.

The enzyme catalyses 3-oxopropanoate + NAD(+) + CoA + H2O = hydrogencarbonate + acetyl-CoA + NADH + H(+). The catalysed reaction is 2-methyl-3-oxopropanoate + NAD(+) + CoA + H2O = propanoyl-CoA + hydrogencarbonate + NADH + H(+). It participates in polyol metabolism; myo-inositol degradation into acetyl-CoA; acetyl-CoA from myo-inositol: step 7/7. In terms of biological role, catalyzes the oxidation of malonate semialdehyde (MSA) and methylmalonate semialdehyde (MMSA) into acetyl-CoA and propanoyl-CoA, respectively. Is involved in a myo-inositol catabolic pathway. Bicarbonate, and not CO2, is the end-product of the enzymatic reaction. The sequence is that of Malonate-semialdehyde dehydrogenase from Bacillus cereus (strain ATCC 14579 / DSM 31 / CCUG 7414 / JCM 2152 / NBRC 15305 / NCIMB 9373 / NCTC 2599 / NRRL B-3711).